Here is a 283-residue protein sequence, read N- to C-terminus: NFU1 iron-sulfur cluster scaffold homolog, mitochondrial (283 aa).

The transit peptide at 1–30 directs the protein to the mitochondrion; it reads MSKFLSQAALNTLRNTRLGSRQLVRSFAGI. The interval 182–250 is nifU; the sequence is IKELLDTRIR…IPEVESVEQV (69 aa). Cysteine 219 and cysteine 222 together coordinate [4Fe-4S] cluster.

This sequence belongs to the NifU family.

The protein resides in the mitochondrion. In terms of biological role, molecular scaffold for [Fe-S] cluster assembly of mitochondrial iron-sulfur proteins. The protein is NFU1 iron-sulfur cluster scaffold homolog, mitochondrial of Drosophila yakuba (Fruit fly).